Reading from the N-terminus, the 319-residue chain is tRNA U34 carboxymethyltransferase (319 aa).

Carboxy-S-adenosyl-L-methionine is bound by residues Lys-88, Trp-102, Lys-107, Gly-126, 176–177 (LE), Met-192, Tyr-196, and Arg-311.

The protein belongs to the class I-like SAM-binding methyltransferase superfamily. CmoB family. In terms of assembly, homotetramer.

It catalyses the reaction carboxy-S-adenosyl-L-methionine + 5-hydroxyuridine(34) in tRNA = 5-carboxymethoxyuridine(34) in tRNA + S-adenosyl-L-homocysteine + H(+). In terms of biological role, catalyzes carboxymethyl transfer from carboxy-S-adenosyl-L-methionine (Cx-SAM) to 5-hydroxyuridine (ho5U) to form 5-carboxymethoxyuridine (cmo5U) at position 34 in tRNAs. The sequence is that of tRNA U34 carboxymethyltransferase from Azotobacter vinelandii (strain DJ / ATCC BAA-1303).